The primary structure comprises 314 residues: MKITLIIPTYNAGSLWPNVLDAIKQQTIYPDKLIVIDSGSKDETVPLASDLKNISIFNIDSKDFNHGGTRNLAVAKTLDADVIIFLTQDAILADSDAIKNLVYYFSDPLIAAVCGRQLPHKDANPLAVHARNFNYSSKSIVKSKADIEKLGIKTVFMSNSFAAYRRSVFEELSGFPEHTILAEDMFMAAKMIQAGYKVAYCAEAVVRHSHNYTPREEFQRYFDTGVFHACSPWIQRDFGGAGGEGFRFVKSEIQFLLKNAPFWIPRALLTTFAKFLGYKLGKHWQSLPLSTCRYFSMYKSYWNNIQYSSSKEIK.

It belongs to the glycosyltransferase 2 family.

The enzyme catalyses alpha-D-galactosyl-di-trans,octa-cis-undecaprenyl diphosphate + dTDP-beta-L-rhamnose = alpha-L-rhamnosyl-(1-&gt;3)-alpha-D-galactosyl-1-diphospho-di-trans,octa-cis-undecaprenol + dTDP + H(+). It participates in bacterial outer membrane biogenesis; LPS O-antigen biosynthesis. Rhamnosyltransferase involved in the biosynthesis of the repeat unit of the lipopolysaccharide (LPS) O-antigen region. Catalyzes the addition of a rhamnose to the galactosyl-undecaprenyl diphosphate intermediate. The chain is O-antigen chain rhamnosyltransferase RfbN from Salmonella typhimurium (strain LT2 / SGSC1412 / ATCC 700720).